Consider the following 383-residue polypeptide: Teichoic acid glycerol-phosphate primase (383 aa).

It belongs to the CDP-glycerol glycerophosphotransferase family.

The protein localises to the cell membrane. The catalysed reaction is N-acetyl-beta-D-mannosaminyl-(1-&gt;4)-N-acetyl-alpha-D-glucosaminyl di-trans,octa-cis-undecaprenyl diphosphate + CDP-glycerol = 4-O-[(2R)-glycerylphospho]-N-acetyl-beta-D-mannosaminyl-(1-&gt;4)-N-acetyl-alpha-D-glucosaminyl di-trans,octa-cis-undecaprenyl diphosphate + CMP + H(+). Its pathway is cell wall biogenesis; poly(ribitol phosphate) teichoic acid biosynthesis. Functionally, catalyzes the addition of a single glycerol phosphate residue to the prenoldiphosphate-linked disaccharide. The protein is Teichoic acid glycerol-phosphate primase (tarB) of Bacillus spizizenii (strain ATCC 23059 / NRRL B-14472 / W23) (Bacillus subtilis subsp. spizizenii).